A 643-amino-acid chain; its full sequence is Thioredoxin reductase 3 (643 aa).

The interval M1–E53 is disordered. R26 is modified (asymmetric dimethylarginine; alternate). R26 bears the Omega-N-methylarginine; alternate mark. Phosphoserine is present on residues S41 and S42. In terms of domain architecture, Glutaredoxin spans R56 to D156. FAD is bound at residue D158–F187. C203 and C208 are joined by a disulfide. An N6-succinyllysine modification is found at K379. The active-site Proton acceptor is the H616. Residues C641–U642 constitute a cross-link (cysteinyl-selenocysteine (Cys-Sec)). U642 is a non-standard amino acid (selenocysteine).

It belongs to the class-I pyridine nucleotide-disulfide oxidoreductase family. Homodimer. Requires FAD as cofactor.

It is found in the cytoplasm. The protein resides in the nucleus. It localises to the microsome. The protein localises to the endoplasmic reticulum. The catalysed reaction is [thioredoxin]-dithiol + NADP(+) = [thioredoxin]-disulfide + NADPH + H(+). Its function is as follows. Displays thioredoxin reductase, glutaredoxin and glutathione reductase activities. Catalyzes disulfide bond isomerization. Promotes disulfide bond formation between GPX4 and various sperm proteins and may play a role in sperm maturation by promoting formation of sperm structural components. This chain is Thioredoxin reductase 3, found in Homo sapiens (Human).